The sequence spans 194 residues: Pyridoxal 5'-phosphate synthase subunit PdxT (194 aa).

L-glutamine is bound at residue 50–52; it reads GES. Cysteine 82 serves as the catalytic Nucleophile. L-glutamine contacts are provided by residues arginine 109 and 136 to 137; that span reads IR. Residues histidine 172 and glutamate 174 each act as charge relay system in the active site.

This sequence belongs to the glutaminase PdxT/SNO family. As to quaternary structure, in the presence of PdxS, forms a dodecamer of heterodimers. Only shows activity in the heterodimer.

The catalysed reaction is aldehydo-D-ribose 5-phosphate + D-glyceraldehyde 3-phosphate + L-glutamine = pyridoxal 5'-phosphate + L-glutamate + phosphate + 3 H2O + H(+). The enzyme catalyses L-glutamine + H2O = L-glutamate + NH4(+). It participates in cofactor biosynthesis; pyridoxal 5'-phosphate biosynthesis. Catalyzes the hydrolysis of glutamine to glutamate and ammonia as part of the biosynthesis of pyridoxal 5'-phosphate. The resulting ammonia molecule is channeled to the active site of PdxS. The sequence is that of Pyridoxal 5'-phosphate synthase subunit PdxT from Streptococcus pneumoniae (strain CGSP14).